A 110-amino-acid polypeptide reads, in one-letter code: Iron-sulfur cluster assembly protein CyaY (110 aa).

This sequence belongs to the frataxin family.

Its function is as follows. Involved in iron-sulfur (Fe-S) cluster assembly. May act as a regulator of Fe-S biogenesis. This Azotobacter vinelandii (strain DJ / ATCC BAA-1303) protein is Iron-sulfur cluster assembly protein CyaY.